A 391-amino-acid polypeptide reads, in one-letter code: MIGTPYTEGARRAMLLGCGELGKEVAIELQRLGVEVIGVDRYANAPAMQVAHRSHVINMLDANALRAVIELEKPHLVIPEIEAIATQTLVDMEAEGVNIIPTARATKLTMDREGIRRLAAETLGLPTSPYFFCDTETEFNQAISEIGVPCVVKPVMSSSGKGQSVIRDIALSHKAWQYAQEGGRAGGGRVIVEGFIPFDYEITLLTISAVNGIHFCAPIGHRQEDGDYRESWQPQAMSDEVLAKSQAIASKVVEALGGYGLFGVELFVKGHEVYFSEVSPRPHDTGLVTLISQDLSEFALHVRAIQGLPIPNIHQHGPSASAVILAEGTSSNIRYQGIAAALEAVNTQLRLFAKPDIDGRRRLGVALARDIDIDSAVSKALDSASKVKVIF.

N(1)-(5-phospho-beta-D-ribosyl)glycinamide contacts are provided by residues 20-21 (EL) and Glu-80. Residues Arg-112, Lys-153, 158–163 (SSGKGQ), 193–196 (EGFI), and Glu-201 contribute to the ATP site. The ATP-grasp domain occupies 117–306 (RLAAETLGLP…EFALHVRAIQ (190 aa)). The Mg(2+) site is built by Glu-265 and Glu-277. Residues Asp-284, Lys-354, and 361–362 (RR) contribute to the N(1)-(5-phospho-beta-D-ribosyl)glycinamide site.

The protein belongs to the PurK/PurT family. Homodimer.

The catalysed reaction is N(1)-(5-phospho-beta-D-ribosyl)glycinamide + formate + ATP = N(2)-formyl-N(1)-(5-phospho-beta-D-ribosyl)glycinamide + ADP + phosphate + H(+). The protein operates within purine metabolism; IMP biosynthesis via de novo pathway; N(2)-formyl-N(1)-(5-phospho-D-ribosyl)glycinamide from N(1)-(5-phospho-D-ribosyl)glycinamide (formate route): step 1/1. Its function is as follows. Involved in the de novo purine biosynthesis. Catalyzes the transfer of formate to 5-phospho-ribosyl-glycinamide (GAR), producing 5-phospho-ribosyl-N-formylglycinamide (FGAR). Formate is provided by PurU via hydrolysis of 10-formyl-tetrahydrofolate. This chain is Formate-dependent phosphoribosylglycinamide formyltransferase, found in Shewanella baltica (strain OS185).